We begin with the raw amino-acid sequence, 449 residues long: Aspartate aminotransferase 3, chloroplastic (449 aa).

A chloroplast-targeting transit peptide spans 1–43 (MKTTHFSSSSSSDRRIGALLRHLNSGSDSDNLSSLYASPTSGG). Residues G81, W178, and N231 each contribute to the L-aspartate site. K295 is subject to N6-(pyridoxal phosphate)lysine. An L-aspartate-binding site is contributed by R423.

This sequence belongs to the class-I pyridoxal-phosphate-dependent aminotransferase family. As to quaternary structure, homodimer. Pyridoxal 5'-phosphate serves as cofactor. Expressed in roots, cauline leaves, flowers, hypocotyl epidermis and root hair cells.

Its subcellular location is the plastid. The protein resides in the chloroplast. It catalyses the reaction L-aspartate + 2-oxoglutarate = oxaloacetate + L-glutamate. In terms of biological role, amino acid aminotransferase important for the metabolism of amino acids and Krebs-cycle related organic acids. No activity with D-Asp or D-Ala as amino donors. In plants, it is involved in nitrogen metabolism and in aspects of carbon and energy metabolism. The sequence is that of Aspartate aminotransferase 3, chloroplastic (ASP3) from Arabidopsis thaliana (Mouse-ear cress).